Here is a 993-residue protein sequence, read N- to C-terminus: DNA-binding protein SMUBP-2 (993 aa).

N-acetylalanine is present on Ala2. ATP-binding positions include 214–221 (GPPGTGKT), Gln403, Tyr442, and Glu571. An SS DNA-binding region spans residues 638-785 (TAFEYLDDIV…KRRFITVSKR (148 aa)). Disordered stretches follow at residues 651 to 723 (YSHE…VESQ), 782 to 828 (VSKR…PDQP), and 841 to 879 (VRSA…DLPT). 2 stretches are compositionally biased toward polar residues: residues 653 to 662 (HENSQGSSHA) and 669 to 681 (PATS…QRQE). The R3H domain maps to 723-786 (QDGVDHFRAM…RRFITVSKRA (64 aa)). Over residues 818-828 (PPREQRGPDQP) the composition is skewed to basic and acidic residues. Over residues 842 to 859 (RSAQGQPASKEQQASGQQ) the composition is skewed to polar residues. The Nuclear localization signal motif lies at 864–868 (KKKKK). The segment at 891 to 940 (VKADNTCGFAKCTAGVTTLGQFCQLCSRRYCLSHHLPEIHGCGERARAHA) adopts an AN1-type zinc-finger fold. Zn(2+)-binding residues include Cys897, Cys902, Cys913, Cys916, Cys921, His924, His930, and Cys932. The segment at 971-993 (RRLDKKLSELSNQRTSRRKERGT) is disordered.

It belongs to the DNA2/NAM7 helicase family. As to quaternary structure, homooligomer. Interacts with RUVBL1. Interacts with RUVBL2. Interacts with GTF3C1. Interacts with ABT1. Interacts with ribosomes. Expressed in all tissues examined. Expressed in the developing and adult human brain, with highest expression in the cerebellum. Moderately expressed in fibroblasts.

It localises to the nucleus. Its subcellular location is the cytoplasm. The protein resides in the cell projection. The protein localises to the axon. The catalysed reaction is ATP + H2O = ADP + phosphate + H(+). 5' to 3' helicase that unwinds RNA and DNA duplexes in an ATP-dependent reaction. Specific to 5'-phosphorylated single-stranded guanine-rich sequences. May play a role in RNA metabolism, ribosome biogenesis or initiation of translation. May play a role in regulation of transcription. Interacts with tRNA-Tyr. The sequence is that of DNA-binding protein SMUBP-2 (IGHMBP2) from Homo sapiens (Human).